Consider the following 170-residue polypeptide: Peptide deformylase (170 aa).

Fe cation is bound by residues cysteine 91 and histidine 133. Glutamate 134 is a catalytic residue. Histidine 137 is a Fe cation binding site.

Belongs to the polypeptide deformylase family. Fe(2+) serves as cofactor.

It carries out the reaction N-terminal N-formyl-L-methionyl-[peptide] + H2O = N-terminal L-methionyl-[peptide] + formate. Removes the formyl group from the N-terminal Met of newly synthesized proteins. Requires at least a dipeptide for an efficient rate of reaction. N-terminal L-methionine is a prerequisite for activity but the enzyme has broad specificity at other positions. The sequence is that of Peptide deformylase from Yersinia enterocolitica serotype O:8 / biotype 1B (strain NCTC 13174 / 8081).